The sequence spans 422 residues: MPSSEHSFISVPHDALRSVRSFLAFFSKSFNRDQVLLSAGSLAFQTLLSIVPLMAVILSVLSVSPVFDSFKQYVEEFIFQNFLPASGVEVQEYLWQFISKTSSVPTIGGLSLFIIALFLISTIDHTLNRIWGVDAPRKFFQGFTLYWTVLTLGPIFIGSSLVATSYVWYNFFTQGALADVQAKTLLLLPVMNTFLAFFLLYILVPNRKVKFVHAFSGAILATLLFEFSKRWFAFYVSHVATFEHIYGALSVIPLLFFWIYLIWVVALSGAEFVYCLGVVHPERAVVREFHPLLGISAVLLVIERISAAQSSGGFLTMNTLEDLCRSVTRMQLRRITDFLLQQNIIHKTEEGSFALSADLHTLTLYDLYAILPADLVQPKDPETSDSHFGQDLSGLEQNIIQCLQHAMHQPLAAFLNTATRTL.

Transmembrane regions (helical) follow at residues 47 to 67, 103 to 123, 143 to 163, 185 to 205, 208 to 228, and 247 to 267; these read LLSI…SPVF, SVPT…ISTI, FTLY…SLVA, LLLL…ILVP, KVKF…FEFS, and GALS…VVAL.

This sequence belongs to the UPF0761 family.

It localises to the cell inner membrane. The chain is UPF0761 membrane protein Paes_1471 from Prosthecochloris aestuarii (strain DSM 271 / SK 413).